The following is a 293-amino-acid chain: Acetylglutamate kinase (293 aa).

Substrate contacts are provided by residues 66-67 (GG), R88, and N190.

It belongs to the acetylglutamate kinase family. ArgB subfamily.

It localises to the cytoplasm. The catalysed reaction is N-acetyl-L-glutamate + ATP = N-acetyl-L-glutamyl 5-phosphate + ADP. It participates in amino-acid biosynthesis; L-arginine biosynthesis; N(2)-acetyl-L-ornithine from L-glutamate: step 2/4. In terms of biological role, catalyzes the ATP-dependent phosphorylation of N-acetyl-L-glutamate. This Thiobacillus denitrificans (strain ATCC 25259 / T1) protein is Acetylglutamate kinase.